A 166-amino-acid chain; its full sequence is Small ribosomal subunit protein uS5 (166 aa).

Residues 11–74 (LQEKLVQVNR…DQARRNMVKV (64 aa)) form the S5 DRBM domain.

This sequence belongs to the universal ribosomal protein uS5 family. Part of the 30S ribosomal subunit. Contacts proteins S4 and S8.

In terms of biological role, with S4 and S12 plays an important role in translational accuracy. Functionally, located at the back of the 30S subunit body where it stabilizes the conformation of the head with respect to the body. This is Small ribosomal subunit protein uS5 from Chromohalobacter salexigens (strain ATCC BAA-138 / DSM 3043 / CIP 106854 / NCIMB 13768 / 1H11).